The primary structure comprises 872 residues: DNA mismatch repair protein MutS (872 aa).

622-629 (GPNMAGKS) contributes to the ATP binding site.

The protein belongs to the DNA mismatch repair MutS family.

This protein is involved in the repair of mismatches in DNA. It is possible that it carries out the mismatch recognition step. This protein has a weak ATPase activity. The polypeptide is DNA mismatch repair protein MutS (Geobacter metallireducens (strain ATCC 53774 / DSM 7210 / GS-15)).